The chain runs to 312 residues: DNA-directed RNA polymerase subunit alpha (312 aa).

Residues 1 to 226 are alpha N-terminal domain (alpha-NTD); the sequence is MIEFEKPIIT…EHLNLFTDLT (226 aa). The segment at 242 to 312 is alpha C-terminal domain (alpha-CTD); the sequence is NDEKLLDRTI…DLGLGLKNDK (71 aa).

This sequence belongs to the RNA polymerase alpha chain family. As to quaternary structure, homodimer. The RNAP catalytic core consists of 2 alpha, 1 beta, 1 beta' and 1 omega subunit. When a sigma factor is associated with the core the holoenzyme is formed, which can initiate transcription.

The enzyme catalyses RNA(n) + a ribonucleoside 5'-triphosphate = RNA(n+1) + diphosphate. DNA-dependent RNA polymerase catalyzes the transcription of DNA into RNA using the four ribonucleoside triphosphates as substrates. The polypeptide is DNA-directed RNA polymerase subunit alpha (Streptococcus thermophilus (strain CNRZ 1066)).